The following is a 352-amino-acid chain: Light dependent period A (352 aa).

2 consecutive 4Fe-4S ferredoxin-type domains span residues 88–119 (RRAW…STGV) and 121–144 (RDRC…AQAW). [4Fe-4S] cluster is bound by residues Cys97, Cys101, Cys105, Cys109, Cys124, Cys127, Cys130, and Cys134.

As to quaternary structure, interacts with KaiA, CikA and SasA; the complexes do not follow circadian rhythms. [4Fe-4S] cluster is required as a cofactor.

Functions in an input pathway to the Kai circadian clock. Probably senses the metabolic state of the cell via plastoquinone levels and informs the clock to modulate the photoperiod length. Deletion decreases the ability of the bacteria to modulate the circadian period in response to altered light regimes. Mild overexpression increases the photoperiod. Rapidly degraded in the presence of the quinone analog DBMIB (2,5-dibromo-3-methyl-6-isopropyl-p-benzoquinone), an artifical electron acceptor for photosystem II that reduces the plastoquinone pool. Partially resonsible for sensitivity of CikA to DBMIB, influences the levels of KaiA. The protein is Light dependent period A of Synechococcus elongatus (strain ATCC 33912 / PCC 7942 / FACHB-805) (Anacystis nidulans R2).